The sequence spans 696 residues: Rho-related BTB domain-containing protein 1 (696 aa).

The rho-like stretch occupies residues 1–210; that stretch reads MDADMDYERP…DNAIRAALIS (210 aa). Residues 21–28, 84–88, and 140–143 contribute to the GTP site; these read GDNAVGKT, DTFGD, and CQLD. 2 BTB domains span residues 266–427 and 485–552; these read ADVL…DEKE and SDVT…SPNL. The interval 327–348 is disordered; that stretch reads VDPEEEREEGPPRIPQADQWKS.

The protein belongs to the small GTPase superfamily. Rho family. Ubiquitous, with highest levels in skeletal muscle, placenta, testis, stomach, and kidney, followed by uterus and adrenal gland. Expressed in a variety of fetal tissues.

The polypeptide is Rho-related BTB domain-containing protein 1 (RHOBTB1) (Homo sapiens (Human)).